A 710-amino-acid polypeptide reads, in one-letter code: Effector protein AvrPphD (710 aa).

The segment covering 1–15 (MNPLRSIQHNITTPP) has biased composition (polar residues). Disordered regions lie at residues 1 to 36 (MNPLRSIQHNITTPPISGGQPLDAVGPQAQQSHPKR), 136 to 155 (ISFDVPSPPPAHGSASSVLS), and 173 to 207 (SSSLETPLVSSPDHSRPPSQPKPVHIGSVRRDSGS).

The protein resides in the secreted. Effector protein involved in non-host recognition and able to elicit hypersensitive response (HR). The chain is Effector protein AvrPphD (avrPphD) from Pseudomonas savastanoi pv. phaseolicola (Pseudomonas syringae pv. phaseolicola).